The following is a 493-amino-acid chain: Dipeptide and tripeptide permease B (493 aa).

Residues 1–27 lie on the Cytoplasmic side of the membrane; that stretch reads MERSTPTGLLQQPKPFFMIFFVELWER. A helical transmembrane segment spans residues 28 to 48; sequence FGYYGVQGILAVFFVQQLGFS. Residues 49-52 are Periplasmic-facing; that stretch reads QEQA. The chain crosses the membrane as a helical span at residues 53–73; the sequence is FVTFGAFAALVYGLISIGGYV. Topologically, residues 74 to 82 are cytoplasmic; sequence GDHLLGTKR. A helical transmembrane segment spans residues 83–103; it reads TMVLGAVVLAAGYFATGLSLY. The Periplasmic portion of the chain corresponds to 104–106; the sequence is QPN. Residues 107-127 form a helical membrane-spanning segment; sequence LIFFALGTIAVGNGLFKANPA. Residues 128–146 lie on the Cytoplasmic side of the membrane; the sequence is SLLSKCYPPKDPRLDGAFT. Residues 147-167 traverse the membrane as a helical segment; it reads LFYMSINIGSLLSLSLAPVIA. Residues 168 to 169 are Periplasmic-facing; it reads ER. Residues 170 to 190 traverse the membrane as a helical segment; sequence FGYTVTYYLCGIGLIFALLVY. The Cytoplasmic portion of the chain corresponds to 191 to 212; that stretch reads FCCRHMVRHIGSEPDTKPLNWR. The next 2 membrane-spanning stretches (helical) occupy residues 213 to 233 and 234 to 254; these read NLLL…WLMN and HVFI…FIFF. Topologically, residues 255-267 are cytoplasmic; sequence REASKQDRLGRNK. The chain crosses the membrane as a helical span at residues 268–288; that stretch reads MFVAFILMIEAIVFYVLYAQM. The Periplasmic portion of the chain corresponds to 289-311; that stretch reads PTSLNFFAINNVHHEILGFSINP. The chain crosses the membrane as a helical span at residues 312 to 332; that stretch reads VSFQALNPFWVVVASPILASI. The Cytoplasmic segment spans residues 333-350; sequence YTRLGSQNRDLSMPAKFT. A helical transmembrane segment spans residues 351 to 371; it reads LGMFLCSLGFLTAAAAGMWFA. The Periplasmic segment spans residues 372-379; sequence DAQGLTSP. A helical transmembrane segment spans residues 380–400; the sequence is WFIVLVYLFQSLGELMISALG. Residues 401–424 are Cytoplasmic-facing; sequence LAMVAALVPQYLMGFILGMWFLTQ. The chain crosses the membrane as a helical span at residues 425–445; sequence AASFLIGGYVATFTATPEGMT. Residues 446–456 lie on the Periplasmic side of the membrane; the sequence is DPLETLPIYTD. The chain crosses the membrane as a helical span at residues 457 to 477; that stretch reads VFGKIGMVTLVIALVMALLIP. Residues 478–493 are Cytoplasmic-facing; it reads WLNRMINSSAAEDAVA.

The protein belongs to the major facilitator superfamily. Proton-dependent oligopeptide transporter (POT/PTR) (TC 2.A.17) family. DtpB subfamily.

The protein resides in the cell inner membrane. In terms of biological role, proton-dependent permease that transports di- and tripeptides. The protein is Dipeptide and tripeptide permease B of Yersinia enterocolitica serotype O:8 / biotype 1B (strain NCTC 13174 / 8081).